The primary structure comprises 120 residues: MIKQIGTVAVYVEDQQKAKQFWTEKVGFDIAADHPMGPEASWLEVAPKGAETRLVIYPKAMMKGSEQMKASIVFECEDIFGTYEKMKTNGVEFLGEPNQMEWGTFVQFKDEDGNVFLLKE.

Residues 4–120 (QIGTVAVYVE…EDGNVFLLKE (117 aa)) form the VOC domain.

This is an uncharacterized protein from Bacillus subtilis (strain 168).